The primary structure comprises 274 residues: Ribosomal RNA small subunit methyltransferase A (274 aa).

Residues Asn-26, Leu-28, Gly-53, Glu-74, Asp-94, and Asn-114 each coordinate S-adenosyl-L-methionine.

Belongs to the class I-like SAM-binding methyltransferase superfamily. rRNA adenine N(6)-methyltransferase family. RsmA subfamily.

The protein localises to the cytoplasm. It catalyses the reaction adenosine(1518)/adenosine(1519) in 16S rRNA + 4 S-adenosyl-L-methionine = N(6)-dimethyladenosine(1518)/N(6)-dimethyladenosine(1519) in 16S rRNA + 4 S-adenosyl-L-homocysteine + 4 H(+). Its function is as follows. Specifically dimethylates two adjacent adenosines (A1518 and A1519) in the loop of a conserved hairpin near the 3'-end of 16S rRNA in the 30S particle. May play a critical role in biogenesis of 30S subunits. The polypeptide is Ribosomal RNA small subunit methyltransferase A (Bdellovibrio bacteriovorus (strain ATCC 15356 / DSM 50701 / NCIMB 9529 / HD100)).